The sequence spans 198 residues: RNA pyrophosphohydrolase (198 aa).

The region spanning 6-149 (GYRPNVGIVI…KKEVYRKAMK (144 aa)) is the Nudix hydrolase domain. Residues 38–59 (GGINDNESAEQAMYRELFEEVG) carry the Nudix box motif.

It belongs to the Nudix hydrolase family. RppH subfamily. Requires a divalent metal cation as cofactor.

In terms of biological role, accelerates the degradation of transcripts by removing pyrophosphate from the 5'-end of triphosphorylated RNA, leading to a more labile monophosphorylated state that can stimulate subsequent ribonuclease cleavage. The sequence is that of RNA pyrophosphohydrolase from Pasteurella multocida (strain Pm70).